The following is a 64-amino-acid chain: Delta-buthitoxin-Hj2a (64 aa).

Cystine bridges form between C12–C63, C16–C36, C22–C46, and C26–C48. R64 bears the Arginine amide mark.

The protein belongs to the long (4 C-C) scorpion toxin superfamily. Sodium channel inhibitor family. Alpha subfamily. Expressed by the venom gland.

The protein localises to the secreted. Functionally, this non-amidated recombinant toxin slows fast inactivation on Nav1.1/SCN1A (EC(50)=52.8 nM), Nav1.4/SN4A (EC(50)=32 nM), Nav1.5/SCN5A (EC(50)=116.7 nM), Nav1.6/SCN8A (EC(50)=46.3 nM), and Nav1.7/SCN9A (EC(50)=147.4 nM) voltage-gated sodium channels. On Nav1.1/SCN1A channel, acts as an agonist by inducing a shift in both the voltage dependence of channel inactivation (alpha-toxin activity) and activation (beta-toxin activity). In Hottentotta judaicus (Black scorpion), this protein is Delta-buthitoxin-Hj2a.